Here is a 44-residue protein sequence, read N- to C-terminus: Photosystem II reaction center protein K (44 aa).

A propeptide spanning residues 1–7 (MESLLLA) is cleaved from the precursor. The helical transmembrane segment at 23–43 (LPIIPVFFLLLAFVWQAAIGF) threads the bilayer.

It belongs to the PsbK family. PSII is composed of 1 copy each of membrane proteins PsbA, PsbB, PsbC, PsbD, PsbE, PsbF, PsbH, PsbI, PsbJ, PsbK, PsbL, PsbM, PsbT, PsbX, PsbY, PsbZ, Psb30/Ycf12, at least 3 peripheral proteins of the oxygen-evolving complex and a large number of cofactors. It forms dimeric complexes.

Its subcellular location is the plastid. It is found in the chloroplast thylakoid membrane. In terms of biological role, one of the components of the core complex of photosystem II (PSII). PSII is a light-driven water:plastoquinone oxidoreductase that uses light energy to abstract electrons from H(2)O, generating O(2) and a proton gradient subsequently used for ATP formation. It consists of a core antenna complex that captures photons, and an electron transfer chain that converts photonic excitation into a charge separation. This Trieres chinensis (Marine centric diatom) protein is Photosystem II reaction center protein K.